Consider the following 348-residue polypeptide: Dihydroorotase (348 aa).

2 residues coordinate Zn(2+): His-17 and His-19. Residues 19-21 (HLR) and Asn-45 each bind substrate. Lys-103, His-140, and His-178 together coordinate Zn(2+). N6-carboxylysine is present on Lys-103. His-140 contributes to the substrate binding site. Leu-223 serves as a coordination point for substrate. Zn(2+) is bound at residue Asp-251. Asp-251 is a catalytic residue. Substrate contacts are provided by His-255 and Ala-267.

Belongs to the metallo-dependent hydrolases superfamily. DHOase family. Class II DHOase subfamily. In terms of assembly, homodimer. Zn(2+) serves as cofactor.

It catalyses the reaction (S)-dihydroorotate + H2O = N-carbamoyl-L-aspartate + H(+). It functions in the pathway pyrimidine metabolism; UMP biosynthesis via de novo pathway; (S)-dihydroorotate from bicarbonate: step 3/3. Functionally, catalyzes the reversible cyclization of carbamoyl aspartate to dihydroorotate. The protein is Dihydroorotase of Yersinia pseudotuberculosis serotype O:1b (strain IP 31758).